The primary structure comprises 190 residues: UPF0200 protein OE_4442F (190 aa).

8 to 15 (GMPGSGKS) contributes to the ATP binding site. Residues 120-144 (ARIEDRDRPGDTDGEPLDAREDRER) are disordered.

This sequence belongs to the UPF0200 family.

The protein is UPF0200 protein OE_4442F of Halobacterium salinarum (strain ATCC 29341 / DSM 671 / R1).